The following is a 290-amino-acid chain: Fructose-1,6-bisphosphatase class 1 (290 aa).

Positions 78, 96, 98, and 99 each coordinate Mg(2+). Residues 99–102 (DGSS), Tyr-201, and Lys-226 contribute to the substrate site. Glu-232 is a Mg(2+) binding site.

This sequence belongs to the FBPase class 1 family. Homotetramer. Mg(2+) is required as a cofactor.

The protein resides in the cytoplasm. The catalysed reaction is beta-D-fructose 1,6-bisphosphate + H2O = beta-D-fructose 6-phosphate + phosphate. It participates in carbohydrate biosynthesis; gluconeogenesis. This is Fructose-1,6-bisphosphatase class 1 from Helicobacter pylori (strain G27).